A 151-amino-acid chain; its full sequence is MKLILTAEVEHLGVPGDAVEVKDGYGRNYLLPRGLAIVATRGAQRQADDIRRAQELKSVKGLEHANELKQAIEGLESVELAVKTAADSGKLFGSVTAADVVAAIKKAGGPNLDKRTIGLPKAHIKTTGAHDIAVRLHPEVTAALSLNVVAG.

The protein belongs to the bacterial ribosomal protein bL9 family.

Binds to the 23S rRNA. The sequence is that of Large ribosomal subunit protein bL9 from Mycolicibacterium vanbaalenii (strain DSM 7251 / JCM 13017 / BCRC 16820 / KCTC 9966 / NRRL B-24157 / PYR-1) (Mycobacterium vanbaalenii).